A 105-amino-acid polypeptide reads, in one-letter code: Large ribosomal subunit protein uL24 (105 aa).

The protein belongs to the universal ribosomal protein uL24 family. Part of the 50S ribosomal subunit.

Functionally, one of two assembly initiator proteins, it binds directly to the 5'-end of the 23S rRNA, where it nucleates assembly of the 50S subunit. One of the proteins that surrounds the polypeptide exit tunnel on the outside of the subunit. The chain is Large ribosomal subunit protein uL24 from Mycolicibacterium vanbaalenii (strain DSM 7251 / JCM 13017 / BCRC 16820 / KCTC 9966 / NRRL B-24157 / PYR-1) (Mycobacterium vanbaalenii).